A 299-amino-acid polypeptide reads, in one-letter code: HTH-type transcriptional regulator ArgP (299 aa).

The region spanning 4 to 60 (PDYRTLQALDAVIRERGFERAAQKLCITQSAVSQRIKQLENMFGQPLLVRTVPPRPT) is the HTH lysR-type domain. The H-T-H motif DNA-binding region spans 21–40 (FERAAQKLCITQSAVSQRIK).

It belongs to the LysR transcriptional regulatory family. Homodimer.

Functionally, controls the transcription of genes involved in arginine and lysine metabolism. In Erwinia tasmaniensis (strain DSM 17950 / CFBP 7177 / CIP 109463 / NCPPB 4357 / Et1/99), this protein is HTH-type transcriptional regulator ArgP.